A 91-amino-acid polypeptide reads, in one-letter code: Small ribosomal subunit protein uS19c (91 aa).

Belongs to the universal ribosomal protein uS19 family.

The protein localises to the plastid. It localises to the organellar chromatophore. In terms of biological role, protein S19 forms a complex with S13 that binds strongly to the 16S ribosomal RNA. The polypeptide is Small ribosomal subunit protein uS19c (Paulinella chromatophora).